The chain runs to 296 residues: 4-hydroxybenzoate octaprenyltransferase (296 aa).

Transmembrane regions (helical) follow at residues 28 to 48 (IGTL…SDGI), 51 to 71 (LAVL…GCVI), 102 to 122 (LLLT…LNHL), 143 to 163 (FFPI…PMAF), 174 to 194 (AWIL…VYAM), 212 to 232 (FGRY…LLMA), 233 to 253 (VLGA…IVLL), and 274 to 294 (FLAN…HTFF).

The protein belongs to the UbiA prenyltransferase family. Mg(2+) is required as a cofactor.

The protein resides in the cell inner membrane. It catalyses the reaction all-trans-octaprenyl diphosphate + 4-hydroxybenzoate = 4-hydroxy-3-(all-trans-octaprenyl)benzoate + diphosphate. The protein operates within cofactor biosynthesis; ubiquinone biosynthesis. Catalyzes the prenylation of para-hydroxybenzoate (PHB) with an all-trans polyprenyl group. Mediates the second step in the final reaction sequence of ubiquinone-8 (UQ-8) biosynthesis, which is the condensation of the polyisoprenoid side chain with PHB, generating the first membrane-bound Q intermediate 3-octaprenyl-4-hydroxybenzoate. This chain is 4-hydroxybenzoate octaprenyltransferase, found in Neisseria meningitidis serogroup B (strain ATCC BAA-335 / MC58).